We begin with the raw amino-acid sequence, 658 residues long: Protein CFAP20DC (658 aa).

2 disordered regions span residues 312-522 (QQGE…EEEY) and 589-634 (PVNQ…LDSS). The segment covering 319–328 (SHPVKQTTPL) has biased composition (polar residues). A compositionally biased stretch (basic and acidic residues) spans 339–349 (PPRDPSADKGS). Low complexity-rich tracts occupy residues 351–363 (RRGLGLRSSSGSR) and 417–434 (SSGPPSGAAGSSSSLLLD). Over residues 494 to 506 (DPKEDSRVTKGDT) the composition is skewed to basic and acidic residues. Positions 507–521 (ELEDDFYGSDSSEEE) are enriched in acidic residues. Residues 625 to 634 (QPLEQSLDSS) are compositionally biased toward polar residues.

This is Protein CFAP20DC from Rattus norvegicus (Rat).